A 220-amino-acid polypeptide reads, in one-letter code: Protein-L-isoaspartate O-methyltransferase (220 aa).

S68 is an active-site residue.

It belongs to the methyltransferase superfamily. L-isoaspartyl/D-aspartyl protein methyltransferase family.

It localises to the cytoplasm. The catalysed reaction is [protein]-L-isoaspartate + S-adenosyl-L-methionine = [protein]-L-isoaspartate alpha-methyl ester + S-adenosyl-L-homocysteine. Catalyzes the methyl esterification of L-isoaspartyl residues in peptides and proteins that result from spontaneous decomposition of normal L-aspartyl and L-asparaginyl residues. It plays a role in the repair and/or degradation of damaged proteins. This chain is Protein-L-isoaspartate O-methyltransferase, found in Dictyoglomus turgidum (strain DSM 6724 / Z-1310).